A 423-amino-acid polypeptide reads, in one-letter code: Imidazolonepropionase (423 aa).

Histidine 87 and histidine 89 together coordinate Fe(3+). The Zn(2+) site is built by histidine 87 and histidine 89. 3 residues coordinate 4-imidazolone-5-propanoate: arginine 96, tyrosine 159, and histidine 192. Tyrosine 159 serves as a coordination point for N-formimidoyl-L-glutamate. Fe(3+) is bound at residue histidine 257. Histidine 257 is a Zn(2+) binding site. A 4-imidazolone-5-propanoate-binding site is contributed by glutamate 260. Aspartate 331 is a Fe(3+) binding site. Aspartate 331 is a Zn(2+) binding site. Residues asparagine 333 and glycine 335 each coordinate N-formimidoyl-L-glutamate. Serine 336 provides a ligand contact to 4-imidazolone-5-propanoate.

The protein belongs to the metallo-dependent hydrolases superfamily. HutI family. Zn(2+) is required as a cofactor. Fe(3+) serves as cofactor.

It localises to the cytoplasm. It catalyses the reaction 4-imidazolone-5-propanoate + H2O = N-formimidoyl-L-glutamate. It participates in amino-acid degradation; L-histidine degradation into L-glutamate; N-formimidoyl-L-glutamate from L-histidine: step 3/3. Functionally, catalyzes the hydrolytic cleavage of the carbon-nitrogen bond in imidazolone-5-propanoate to yield N-formimidoyl-L-glutamate. It is the third step in the universal histidine degradation pathway. In Porphyromonas gingivalis (strain ATCC BAA-308 / W83), this protein is Imidazolonepropionase.